We begin with the raw amino-acid sequence, 180 residues long: Fucolectin-2 (180 aa).

The N-terminal stretch at 1-22 is a signal peptide; the sequence is MKVKMIMLLFQILAILTLKSDS. Residues 31–179 are F5/8 type C-like; the sequence is QENVALRGRA…VEVNVLFPAP (149 aa). Residues Asn-58, Asp-61, Asn-63, and Ser-72 each contribute to the Ca(2+) site. 3 disulfide bridges follow: Cys-73–Cys-168, Cys-104–Cys-105, and Cys-130–Cys-146. Alpha-L-fucose is bound by residues His-75 and Arg-101. Positions 101-103 match the Cell attachment site motif; that stretch reads RGD. Arg-108 is a binding site for alpha-L-fucose. Ca(2+)-binding residues include Cys-168 and Glu-169.

The protein belongs to the fucolectin family. As to quaternary structure, homotrimer. As to expression, parenchymal hepatocytes.

Its subcellular location is the secreted. It is found in the extracellular space. Functionally, acts as a defensive agent. Recognizes blood group fucosylated oligosaccharides including A, B, H and Lewis B-type antigens. Does not recognize Lewis A antigen and has low affinity for monovalent haptens. The chain is Fucolectin-2 from Anguilla japonica (Japanese eel).